A 94-amino-acid polypeptide reads, in one-letter code: Acylphosphatase (94 aa).

Residues 8 to 94 (HIRAWVSGKV…ETPPLGFEVC (87 aa)) enclose the Acylphosphatase-like domain. Catalysis depends on residues R23 and N41.

The protein belongs to the acylphosphatase family.

It carries out the reaction an acyl phosphate + H2O = a carboxylate + phosphate + H(+). This is Acylphosphatase (acyP) from Hahella chejuensis (strain KCTC 2396).